Consider the following 152-residue polypeptide: Heavy metal-associated isoprenylated plant protein 20 (152 aa).

The HMA domain occupies Met-27–Glu-90. Positions 38 and 41 each coordinate Cd(2+). Cys-149 carries the cysteine methyl ester modification. Cys-149 carries S-farnesyl cysteine lipidation. Residues Thr-150–Met-152 constitute a propeptide, removed in mature form.

The protein belongs to the HIPP family. As to quaternary structure, interacts with ZHD11/HB29. In terms of tissue distribution, expressed in roots, shoot apical meristem, leaves and flowers.

It is found in the membrane. In terms of biological role, heavy-metal-binding protein. Binds cadmium. May be involved in cadmium transport and play a role in cadmium detoxification. The sequence is that of Heavy metal-associated isoprenylated plant protein 20 from Arabidopsis thaliana (Mouse-ear cress).